Here is a 540-residue protein sequence, read N- to C-terminus: tRNA-2-methylthio-N(6)-dimethylallyladenosine synthase (540 aa).

One can recognise an MTTase N-terminal domain in the interval 41–157 (RTYEVRTFGC…LPTLLERSAH (117 aa)). The [4Fe-4S] cluster site is built by cysteine 50, cysteine 86, cysteine 120, cysteine 194, cysteine 198, and cysteine 201. Residues 180-416 (RESAYSGWVS…IALQERIQAE (237 aa)) enclose the Radical SAM core domain. A TRAM domain is found at 419 to 486 (KELVGTTQEL…PFFLIADGPL (68 aa)).

The protein belongs to the methylthiotransferase family. MiaB subfamily. In terms of assembly, monomer. Requires [4Fe-4S] cluster as cofactor.

It localises to the cytoplasm. The catalysed reaction is N(6)-dimethylallyladenosine(37) in tRNA + (sulfur carrier)-SH + AH2 + 2 S-adenosyl-L-methionine = 2-methylsulfanyl-N(6)-dimethylallyladenosine(37) in tRNA + (sulfur carrier)-H + 5'-deoxyadenosine + L-methionine + A + S-adenosyl-L-homocysteine + 2 H(+). In terms of biological role, catalyzes the methylthiolation of N6-(dimethylallyl)adenosine (i(6)A), leading to the formation of 2-methylthio-N6-(dimethylallyl)adenosine (ms(2)i(6)A) at position 37 in tRNAs that read codons beginning with uridine. The polypeptide is tRNA-2-methylthio-N(6)-dimethylallyladenosine synthase (Corynebacterium urealyticum (strain ATCC 43042 / DSM 7109)).